The chain runs to 711 residues: T-box transcription factor TBX2 (711 aa).

A DNA-binding region (T-box) is located at residues 109-287; that stretch reads LEAKELWDQF…NNPFAKGFRD (179 aa). Residues 313 to 449 form a disordered region; sequence PERDGAESDA…GEGKEPSLAP (137 aa). The span at 326–340 shows a compositional bias: pro residues; the sequence is DPPPAREPPPSPSAA. 3 positions are modified to phosphoserine: Ser-336, Ser-342, and Ser-360. Composition is skewed to basic and acidic residues over residues 363–372, 390–409, and 421–444; these read EPERTGEERS, TEPERSRERRSPERCSKEPT, and SLEKERPEARRKDEGRKDVGEGKE. The tract at residues 518-602 is repression domain 1 (RD1); that stretch reads GSGSSGGAGP…ATSAAAAAAA (85 aa). A phosphoserine mark is found at Ser-623, Ser-652, Ser-656, and Ser-675. Residues 640–687 form a disordered region; it reads TGLAAEGSKGGNSREPSPLPELALRKVGGPSRGALSPSGSAKEAASEL.

In terms of assembly, binds DNA as a monomer. Interacts with CHD4, HDAC1 and HDAC2, perhaps as components of a NuRD-like complex. Interacts with CBX3, HMGB2 and PBX1. Interacts with PML. Phosphorylated. May be phosphorylated by p38 MAPK in response to UV irradiation stress. In terms of tissue distribution, in adults, highest levels in lung. Also found in heart, kidney, and ovary.

It is found in the nucleus. Functionally, transcription factor which acts as a transcriptional repressor. May also function as a transcriptional activator. Binds to the palindromic T site 5'-TTCACACCTAGGTGTGAA-3' DNA sequence, or a half-site, which are present in the regulatory region of several genes. Required for cardiac atrioventricular canal formation. May cooperate with NKX2.5 to negatively modulate expression of NPPA/ANF in the atrioventricular canal. May play a role as a positive regulator of TGFB2 expression, perhaps acting in concert with GATA4 in the developing outflow tract myocardium. Plays a role in limb pattern formation. Acts as a transcriptional repressor of ADAM10 gene expression, perhaps in concert with histone deacetylase HDAC1 as cofactor. Involved in branching morphogenesis in both developing lungs and adult mammary glands, via negative modulation of target genes; acting redundantly with TBX3. Required, together with TBX3, to maintain cell proliferation in the embryonic lung mesenchyme; perhaps acting downstream of SHH, BMP and TGFbeta signaling. Involved in modulating early inner ear development, acting independently of, and also redundantly with TBX3, in different subregions of the developing ear. Acts as a negative regulator of PML function in cellular senescence. Acts as a negative regulator of expression of CDKN1A/p21, IL33 and CCN4; repression of CDKN1A is enhanced in response to UV-induced stress, perhaps as a result of phosphorylation by p38 MAPK. Negatively modulates expression of CDKN2A/p19ARF and CDH1/E-cadherin. Plays a role in induction of the epithelial-mesenchymal transition (EMT). Plays a role in melanocyte proliferation, perhaps via regulation of cyclin CCND1. Involved in melanogenesis, acting via negative modulation of expression of DHICA oxidase/TYRP1 and P protein/OCA2. Involved in regulating retinal pigment epithelium (RPE) cell proliferation, perhaps via negatively modulating transcription of the transcription factor CEBPD. This chain is T-box transcription factor TBX2 (Tbx2), found in Mus musculus (Mouse).